We begin with the raw amino-acid sequence, 194 residues long: Crossover junction endodeoxyribonuclease RuvC (194 aa).

Residues D8, E72, and D144 contribute to the active site. Mg(2+) is bound by residues D8, E72, and D144.

It belongs to the RuvC family. Homodimer which binds Holliday junction (HJ) DNA. The HJ becomes 2-fold symmetrical on binding to RuvC with unstacked arms; it has a different conformation from HJ DNA in complex with RuvA. In the full resolvosome a probable DNA-RuvA(4)-RuvB(12)-RuvC(2) complex forms which resolves the HJ. The cofactor is Mg(2+).

It localises to the cytoplasm. It carries out the reaction Endonucleolytic cleavage at a junction such as a reciprocal single-stranded crossover between two homologous DNA duplexes (Holliday junction).. The RuvA-RuvB-RuvC complex processes Holliday junction (HJ) DNA during genetic recombination and DNA repair. Endonuclease that resolves HJ intermediates. Cleaves cruciform DNA by making single-stranded nicks across the HJ at symmetrical positions within the homologous arms, yielding a 5'-phosphate and a 3'-hydroxyl group; requires a central core of homology in the junction. The consensus cleavage sequence is 5'-(A/T)TT(C/G)-3'. Cleavage occurs on the 3'-side of the TT dinucleotide at the point of strand exchange. HJ branch migration catalyzed by RuvA-RuvB allows RuvC to scan DNA until it finds its consensus sequence, where it cleaves and resolves the cruciform DNA. This Psychrobacter arcticus (strain DSM 17307 / VKM B-2377 / 273-4) protein is Crossover junction endodeoxyribonuclease RuvC.